Reading from the N-terminus, the 407-residue chain is Phosphopentomutase (407 aa).

Residues aspartate 10, aspartate 306, histidine 311, aspartate 347, histidine 348, and histidine 359 each coordinate Mn(2+).

The protein belongs to the phosphopentomutase family. Mn(2+) serves as cofactor.

The protein resides in the cytoplasm. It catalyses the reaction 2-deoxy-alpha-D-ribose 1-phosphate = 2-deoxy-D-ribose 5-phosphate. The catalysed reaction is alpha-D-ribose 1-phosphate = D-ribose 5-phosphate. It participates in carbohydrate degradation; 2-deoxy-D-ribose 1-phosphate degradation; D-glyceraldehyde 3-phosphate and acetaldehyde from 2-deoxy-alpha-D-ribose 1-phosphate: step 1/2. Isomerase that catalyzes the conversion of deoxy-ribose 1-phosphate (dRib-1-P) and ribose 1-phosphate (Rib-1-P) to deoxy-ribose 5-phosphate (dRib-5-P) and ribose 5-phosphate (Rib-5-P), respectively. The protein is Phosphopentomutase of Yersinia pestis bv. Antiqua (strain Antiqua).